Reading from the N-terminus, the 207-residue chain is MAEYTLPDLDWDYAALEPHISGQINEIHHSKHHATYVKGVNDALSKLEEARANEDHAAIFLNEKNLAFHLGGHVNHSIWWKNLSPDGGDKPTGELAAAIDDAFGSFDRFRAQFSAAANGLQGSGWAVLGYDTLGNRLLTFQLYDQQANVPLGIIPLLQVDMWEHAFYLQYKNVKADYVKAFWNVVNWADVQKRYAAATSKTQGLIFG.

4 residues coordinate Mn(2+): His-28, His-76, Asp-160, and His-164.

This sequence belongs to the iron/manganese superoxide dismutase family. Mn(2+) is required as a cofactor.

It catalyses the reaction 2 superoxide + 2 H(+) = H2O2 + O2. In terms of biological role, destroys superoxide anion radicals which are normally produced within the cells and which are toxic to biological systems. This is Superoxide dismutase [Mn] (sodA) from Mycobacterium intracellulare (strain ATCC 13950 / DSM 43223 / JCM 6384 / NCTC 13025 / 3600).